A 301-amino-acid polypeptide reads, in one-letter code: Mitochondrial import receptor subunit TOM40 homolog (301 aa).

Polar residues predominate over residues 1 to 19 (MATPTESELASPIPQTNPG). The disordered stretch occupies residues 1 to 20 (MATPTESELASPIPQTNPGS).

This sequence belongs to the Tom40 family. Forms part of the preprotein translocase complex of the outer mitochondrial membrane (TOM complex). Interacts with mitochondrial targeting sequences. In terms of tissue distribution, ubiquitously expressed, but highly expressed in the pharyngeal muscles, the nerve ring, the intestine, gonadal sheath and in the tail hypodermis.

The protein resides in the mitochondrion outer membrane. In terms of biological role, channel-forming protein essential for import of protein precursors into mitochondria. Specifically required for nnt-1 accumulation in the mitochondria and may be involved in the secretion of daf-28/insulin from the mitochondria. Required for embryonic and larval development. This chain is Mitochondrial import receptor subunit TOM40 homolog, found in Caenorhabditis elegans.